Consider the following 199-residue polypeptide: FMN-dependent NADH:quinone oxidoreductase (199 aa).

Residues S9 and 95 to 98 contribute to the FMN site; that span reads MYNF.

This sequence belongs to the azoreductase type 1 family. As to quaternary structure, homodimer. It depends on FMN as a cofactor.

The enzyme catalyses 2 a quinone + NADH + H(+) = 2 a 1,4-benzosemiquinone + NAD(+). It catalyses the reaction N,N-dimethyl-1,4-phenylenediamine + anthranilate + 2 NAD(+) = 2-(4-dimethylaminophenyl)diazenylbenzoate + 2 NADH + 2 H(+). Quinone reductase that provides resistance to thiol-specific stress caused by electrophilic quinones. Its function is as follows. Also exhibits azoreductase activity. Catalyzes the reductive cleavage of the azo bond in aromatic azo compounds to the corresponding amines. The protein is FMN-dependent NADH:quinone oxidoreductase of Dechloromonas aromatica (strain RCB).